A 277-amino-acid polypeptide reads, in one-letter code: 3-methyl-2-oxobutanoate hydroxymethyltransferase (277 aa).

Positions 42 and 81 each coordinate Mg(2+). Residues 42–43 (DS), Asp81, and Lys110 each bind 3-methyl-2-oxobutanoate. Glu112 is a binding site for Mg(2+). Glu179 serves as the catalytic Proton acceptor.

The protein belongs to the PanB family. In terms of assembly, homodecamer; pentamer of dimers. Requires Mg(2+) as cofactor.

Its subcellular location is the cytoplasm. It carries out the reaction 3-methyl-2-oxobutanoate + (6R)-5,10-methylene-5,6,7,8-tetrahydrofolate + H2O = 2-dehydropantoate + (6S)-5,6,7,8-tetrahydrofolate. It functions in the pathway cofactor biosynthesis; (R)-pantothenate biosynthesis; (R)-pantoate from 3-methyl-2-oxobutanoate: step 1/2. Its function is as follows. Catalyzes the reversible reaction in which hydroxymethyl group from 5,10-methylenetetrahydrofolate is transferred onto alpha-ketoisovalerate to form ketopantoate. This chain is 3-methyl-2-oxobutanoate hydroxymethyltransferase, found in Anaplasma marginale (strain Florida).